The chain runs to 205 residues: Holliday junction branch migration complex subunit RuvA (205 aa).

Positions 1 to 64 (MIGKLKGLID…EDQIKLFGFR (64 aa)) are domain I. The interval 65–143 (SDLEREWFRL…AFASVDPAVV (79 aa)) is domain II. The flexible linker stretch occupies residues 144–153 (ALSGALDERS). The tract at residues 153 to 205 (SAPRPVTDAISALVNLGYGQPQAAAAIASASRSAGEGAETAQLIKLGLKELSK) is domain III.

Belongs to the RuvA family. As to quaternary structure, homotetramer. Forms an RuvA(8)-RuvB(12)-Holliday junction (HJ) complex. HJ DNA is sandwiched between 2 RuvA tetramers; dsDNA enters through RuvA and exits via RuvB. An RuvB hexamer assembles on each DNA strand where it exits the tetramer. Each RuvB hexamer is contacted by two RuvA subunits (via domain III) on 2 adjacent RuvB subunits; this complex drives branch migration. In the full resolvosome a probable DNA-RuvA(4)-RuvB(12)-RuvC(2) complex forms which resolves the HJ.

The protein localises to the cytoplasm. Functionally, the RuvA-RuvB-RuvC complex processes Holliday junction (HJ) DNA during genetic recombination and DNA repair, while the RuvA-RuvB complex plays an important role in the rescue of blocked DNA replication forks via replication fork reversal (RFR). RuvA specifically binds to HJ cruciform DNA, conferring on it an open structure. The RuvB hexamer acts as an ATP-dependent pump, pulling dsDNA into and through the RuvAB complex. HJ branch migration allows RuvC to scan DNA until it finds its consensus sequence, where it cleaves and resolves the cruciform DNA. The sequence is that of Holliday junction branch migration complex subunit RuvA from Rhodopseudomonas palustris (strain BisB18).